Consider the following 1089-residue polypeptide: WD repeat-containing protein on Y chromosome (1089 aa).

7 WD repeats span residues 155-199 (EEVA…IRTA), 207-249 (PHAV…RGPF), 329-368 (RIPL…EPSA), 372-411 (GHNG…LLQT), 462-501 (THAA…RKII), 514-553 (TIDI…VIRN), and 601-641 (FHTD…RRYS). Residues 661-684 (KRSKRWASRAPHSGSHMMSHTGSH) are disordered. The segment covering 672 to 684 (HSGSHMMSHTGSH) has biased composition (low complexity). 2 WD repeats span residues 767–806 (KTGD…IPEA) and 850–889 (GHLK…LGTL). The disordered stretch occupies residues 1049 to 1089 (LNIKLPSRRRSDRTNDPRNMRTAKTRGDMGLGHRSSHTSQN).

The sequence is that of WD repeat-containing protein on Y chromosome from Drosophila willistoni (Fruit fly).